Here is a 750-residue protein sequence, read N- to C-terminus: Phosphate transporter PHO1 homolog 7 (750 aa).

Positions 1–298 (MKFGKDFVRQ…SRSAAKPYME (298 aa)) constitute an SPX domain. The Cytoplasmic segment spans residues 1–350 (MKFGKDFVRQ…KVKKEKHRIT (350 aa)). Residues 351–371 (FSTGFFVGCTVSLVVALVMFI) traverse the membrane as a helical segment. The Extracellular portion of the chain corresponds to 372–391 (HARNIMGAVGHKVYMETMFP). The helical transmembrane segment at 392-412 (LYSLFAFVVLHMIMYASNIYF) threads the bilayer. Residues 413 to 435 (WKRYRVNYPFIFGFKEGTELGYR) lie on the Cytoplasmic side of the membrane. Residues 436-456 (HVLLLSFGLGTLALCAVLINL) traverse the membrane as a helical segment. Topologically, residues 457-472 (DMEMDPNTNDYKTMTE) are extracellular. Residues 473-493 (LLPMFILALVVAILFCPFNIF) form a helical membrane-spanning segment. The Cytoplasmic segment spans residues 494-622 (YRSSRVFFLM…YSFNRGNIWK (129 aa)). In terms of domain architecture, EXS spans 557-750 (RSSDVYSTFY…NYNEEEDRDS (194 aa)). A helical transmembrane segment spans residues 623–643 (ISAWVFSALATFYGTYWDIVF). Residues 644-666 (DWGLLHRPSKHLLREKLLVPHKA) are Extracellular-facing. The helical transmembrane segment at 667–687 (VYYVAIVLNIVLRMAWLQTVL) threads the bilayer. Topologically, residues 688–750 (DFNLSFLHRE…NYNEEEDRDS (63 aa)) are cytoplasmic.

It belongs to the SYG1 (TC 2.A.94) family. Expressed in root tips, vascular cylinders of roots and filaments, leaf hydathodes, stem, receptacle and stigma apex.

The protein localises to the cell membrane. May transport inorganic phosphate (Pi). The sequence is that of Phosphate transporter PHO1 homolog 7 (PHO1-H7) from Arabidopsis thaliana (Mouse-ear cress).